Consider the following 159-residue polypeptide: Phosphopantetheine adenylyltransferase (159 aa).

Thr-9 lines the substrate pocket. Residues 9 to 10 and His-17 contribute to the ATP site; that span reads TF. Positions 41, 73, and 87 each coordinate substrate. Residues 88–90, Glu-98, and 123–129 contribute to the ATP site; these read GLR and YMFISAT.

The protein belongs to the bacterial CoaD family. In terms of assembly, homohexamer. The cofactor is Mg(2+).

It is found in the cytoplasm. The enzyme catalyses (R)-4'-phosphopantetheine + ATP + H(+) = 3'-dephospho-CoA + diphosphate. The protein operates within cofactor biosynthesis; coenzyme A biosynthesis; CoA from (R)-pantothenate: step 4/5. Functionally, reversibly transfers an adenylyl group from ATP to 4'-phosphopantetheine, yielding dephospho-CoA (dPCoA) and pyrophosphate. The sequence is that of Phosphopantetheine adenylyltransferase from Nitrosomonas europaea (strain ATCC 19718 / CIP 103999 / KCTC 2705 / NBRC 14298).